A 63-amino-acid chain; its full sequence is DNA-directed RNA polymerase 7 kDa subunit (63 aa).

Belongs to the poxviridae DNA-directed RNA polymerase 7 kDa subunit family. As to quaternary structure, the DNA-dependent RNA polymerase used for intermediate and late genes expression consists of eight subunits 147 kDa, 133 kDa, 35 kDa, 30 kDa, 22 kDa, 19 kDa, 18 kDa and 7 kDa totalling more than 500 kDa in mass. The same holoenzyme, with the addition of the transcription-specificity factor RAP94, is used for early gene expression.

The protein resides in the virion. It catalyses the reaction RNA(n) + a ribonucleoside 5'-triphosphate = RNA(n+1) + diphosphate. Part of the DNA-dependent RNA polymerase which catalyzes the transcription of viral DNA into RNA using the four ribonucleoside triphosphates as substrates. Responsible for the transcription of early, intermediate and late genes. DNA-dependent RNA polymerase associates with the early transcription factor (ETF) thereby allowing the early genes transcription. Late transcription, and probably also intermediate transcription, require newly synthesized RNA polymerase. This Fowlpox virus (strain NVSL) (FPV) protein is DNA-directed RNA polymerase 7 kDa subunit (RPO7).